The chain runs to 575 residues: Arginine--tRNA ligase (575 aa).

The 'HIGH' region signature appears at 130 to 140; that stretch reads ANPTGPMHVGH.

The protein belongs to the class-I aminoacyl-tRNA synthetase family. Monomer.

The protein resides in the cytoplasm. The catalysed reaction is tRNA(Arg) + L-arginine + ATP = L-arginyl-tRNA(Arg) + AMP + diphosphate. The chain is Arginine--tRNA ligase from Magnetococcus marinus (strain ATCC BAA-1437 / JCM 17883 / MC-1).